Consider the following 821-residue polypeptide: Cation/H(+) antiporter 15 (821 aa).

13 consecutive transmembrane segments (helical) span residues 37–57, 65–82, 97–117, 131–151, 166–186, 200–220, 228–248, 268–288, 292–312, 318–338, 350–370, 378–398, and 410–430; these read LPLFVLQLTLVVVVTRFFVFI, RVISEILGGIVLGPSVLG, VMVLETMANVGLLYFLFLVGV, ALTIAIGGMVLPFLIGAAFSF, ILFLGVALSVTAFPVLARILA, MSAALVNDMFAWILLALAIAL, FASLWVMISSAVFIAVCVFVV, FHICLILTGVMISGFITDAIG, VFGAFVFGLVIPNGPLGLTLI, FVSGLLLPLFFAISGLKTNIA, FLVIFLACAGKVIGTVIVAFF, GITLGLLLNTKGLVEMIVLNV, and FATMVLVALVMTGVITPIVTI. Positions 800–821 are disordered; that stretch reads DFPESPVHSHETKVTYGLENPR.

Belongs to the monovalent cation:proton antiporter 2 (CPA2) transporter (TC 2.A.37) family. CHX (TC 2.A.37.4) subfamily. Specifically expressed in pollen.

It localises to the membrane. Its function is as follows. May operate as a cation/H(+) antiporter. The protein is Cation/H(+) antiporter 15 (CHX15) of Arabidopsis thaliana (Mouse-ear cress).